A 341-amino-acid polypeptide reads, in one-letter code: uncharacterized protein (341 aa).

Belongs to the Gfo/Idh/MocA family.

This is an uncharacterized protein from Bacillus subtilis (strain 168).